The sequence spans 220 residues: Iron-sulfur cluster repair protein YtfE (220 aa).

This sequence belongs to the RIC family. YtfE subfamily. Homodimer.

The protein localises to the cytoplasm. Functionally, di-iron-containing protein involved in the repair of iron-sulfur clusters damaged by oxidative and nitrosative stress conditions. The sequence is that of Iron-sulfur cluster repair protein YtfE from Escherichia coli O81 (strain ED1a).